Consider the following 497-residue polypeptide: MRWNKKNVISLVSKSHHLPAPITPPLPEIYRIPNPPPKLPEISIPPTLTLSPSPKHSNFVNFLENNLPHHQTLTPQTLLGFLRSKIRNHPLYAHYDFAVFNWAATLDTFRHDHDSFLWMSRSLAATHRFDDLYRLLSFVAANPCPCSSGIFSCPELEPIFRSAIDAYCRARKMDYALLAFDTMKRLIDGKPNVGVYNTVVNGYVKSGDMDKALRFYQRMGKERAKPDVCTFNILINGYCRSSKFDLALDLFREMKEKGCEPNVVSFNTLIRGFLSSGKIEEGVKMAYEMIELGCRFSEATCEILVDGLCREGRVDDACGLVLDLLNKRVLPSEFDYGSLVEKLCGENKAVRAMEMMEELWKKGQTPCFIACTTLVEGLRKSGRTEKASGFMEKMMNAGILPDSVTFNLLLRDLCSSDHSTDANRLRLLASSKGYEPDETTYHVLVSGFTKEGRRKEGEVLVNEMLDKDMLPDIFTYNRLMDGLSCTGKFSRKQVRML.

9 PPR repeats span residues 156 to 186, 192 to 226, 227 to 261, 262 to 296, 297 to 331, 332 to 366, 367 to 401, 402 to 436, and 437 to 471; these read LEPI…MKRL, NVGV…RAKP, DVCT…GCEP, NVVS…GCRF, SEAT…RVLP, SEFD…GQTP, CFIA…GILP, DSVT…GYEP, and DETT…DMLP.

The protein belongs to the PPR family. P subfamily.

This is Pentatricopeptide repeat-containing protein At2g36240 from Arabidopsis thaliana (Mouse-ear cress).